The following is a 156-amino-acid chain: Endoribonuclease YbeY (156 aa).

The Zn(2+) site is built by H117, H121, and H127.

It belongs to the endoribonuclease YbeY family. The cofactor is Zn(2+).

The protein localises to the cytoplasm. Single strand-specific metallo-endoribonuclease involved in late-stage 70S ribosome quality control and in maturation of the 3' terminus of the 16S rRNA. This is Endoribonuclease YbeY from Shewanella pealeana (strain ATCC 700345 / ANG-SQ1).